A 421-amino-acid chain; its full sequence is MADKKPSKEDPVNMVKLLTRNVLDGIFDDLMENNVLNTEELRNLGKGLNFMVNNAGNLVDNITEKAQMVGKILKDRLLSHPKQLSLEYQHESEDQESEESSASSSSSTESEEENEESKDEERAASAHSMAVPPTAPLEIQGAQPSGRLKLCPHAHFRELKTKRADEIYPVMEKEGRTRLALIICSKEFHYLLNRNGSELDLLGMQDLLENLGYSVVIEENLTAQEMETALRQFAARPEHQSSDSTFLVFMSHGILNGICGTKHWDQEPDVLHDDTIFEIFNNRNCRSLRDKPKVIIMQACRGSGAGIVWFTTDSGKASADTHGQLLQSSICNDAVTKAHVEKDFIAFKSSTPHNVSWRHEMSGSVFISQIIYYFKEYSWSHHLEEIFRKVQRSFETPNVVTQLPTIERLSMTRYFYLFPGN.

In terms of domain architecture, CARD spans 1–92 (MADKKPSKED…QLSLEYQHES (92 aa)). Ser-85 carries the phosphoserine modification. A disordered region spans residues 88–131 (YQHESEDQESEESSASSSSSTESEEENEESKDEERAASAHSMAV). Acidic residues predominate over residues 109–118 (ESEEENEESK). Residues His-252 and Cys-300 contribute to the active site.

This sequence belongs to the peptidase C14A family. In terms of assembly, heterotetramer that consists of two anti-parallel arranged heterodimers, each one formed by two subunits (Potential). May interact with TRAF2.

In terms of biological role, involved in the activation cascade of caspases responsible for apoptosis execution. The protein is Caspase-12 of Macaca mulatta (Rhesus macaque).